The chain runs to 636 residues: Biosynthetic arginine decarboxylase (636 aa).

Lysine 110 carries the post-translational modification N6-(pyridoxal phosphate)lysine. Residue 290-300 participates in substrate binding; that stretch reads IDVGGGLGVDY.

The protein belongs to the Orn/Lys/Arg decarboxylase class-II family. SpeA subfamily. Requires Mg(2+) as cofactor. Pyridoxal 5'-phosphate serves as cofactor.

It catalyses the reaction L-arginine + H(+) = agmatine + CO2. In terms of biological role, catalyzes the biosynthesis of agmatine from arginine. The protein is Biosynthetic arginine decarboxylase of Pseudomonas aeruginosa (strain ATCC 15692 / DSM 22644 / CIP 104116 / JCM 14847 / LMG 12228 / 1C / PRS 101 / PAO1).